A 449-amino-acid polypeptide reads, in one-letter code: Probable pectate lyase P59 (449 aa).

The signal sequence occupies residues Met-1–Pro-22. Asn-56, Asn-80, and Asn-81 each carry an N-linked (GlcNAc...) asparagine glycan. Ca(2+)-binding residues include Asp-245, Asp-269, and Asp-273. Arg-325 is a catalytic residue.

Belongs to the polysaccharide lyase 1 family. The cofactor is Ca(2+). Expressed in anthers and pollen.

It carries out the reaction Eliminative cleavage of (1-&gt;4)-alpha-D-galacturonan to give oligosaccharides with 4-deoxy-alpha-D-galact-4-enuronosyl groups at their non-reducing ends.. It functions in the pathway glycan metabolism; pectin degradation; 2-dehydro-3-deoxy-D-gluconate from pectin: step 2/5. In terms of biological role, might be needed during pollen development and tube growth. This Solanum lycopersicum (Tomato) protein is Probable pectate lyase P59 (LAT59).